Consider the following 311-residue polypeptide: Methionyl-tRNA formyltransferase (311 aa).

109-112 (SLLP) is a (6S)-5,6,7,8-tetrahydrofolate binding site.

Belongs to the Fmt family.

It carries out the reaction L-methionyl-tRNA(fMet) + (6R)-10-formyltetrahydrofolate = N-formyl-L-methionyl-tRNA(fMet) + (6S)-5,6,7,8-tetrahydrofolate + H(+). Its function is as follows. Attaches a formyl group to the free amino group of methionyl-tRNA(fMet). The formyl group appears to play a dual role in the initiator identity of N-formylmethionyl-tRNA by promoting its recognition by IF2 and preventing the misappropriation of this tRNA by the elongation apparatus. The polypeptide is Methionyl-tRNA formyltransferase (Solibacter usitatus (strain Ellin6076)).